Reading from the N-terminus, the 215-residue chain is N-(5'-phosphoribosyl)anthranilate isomerase (215 aa).

This sequence belongs to the TrpF family.

It carries out the reaction N-(5-phospho-beta-D-ribosyl)anthranilate = 1-(2-carboxyphenylamino)-1-deoxy-D-ribulose 5-phosphate. The protein operates within amino-acid biosynthesis; L-tryptophan biosynthesis; L-tryptophan from chorismate: step 3/5. This chain is N-(5'-phosphoribosyl)anthranilate isomerase, found in Paramagnetospirillum magneticum (strain ATCC 700264 / AMB-1) (Magnetospirillum magneticum).